Reading from the N-terminus, the 107-residue chain is Large ribosomal subunit protein eL21 (107 aa).

The protein belongs to the eukaryotic ribosomal protein eL21 family.

This Aeropyrum pernix (strain ATCC 700893 / DSM 11879 / JCM 9820 / NBRC 100138 / K1) protein is Large ribosomal subunit protein eL21 (rpl21e).